The sequence spans 179 residues: Shikimate kinase (179 aa).

G22–S27 contacts ATP. S26 contributes to the Mg(2+) binding site. The substrate site is built by D44, R68, and G90. R128 is a binding site for ATP. R147 is a binding site for substrate.

Belongs to the shikimate kinase family. Monomer. Mg(2+) serves as cofactor.

Its subcellular location is the cytoplasm. It catalyses the reaction shikimate + ATP = 3-phosphoshikimate + ADP + H(+). It participates in metabolic intermediate biosynthesis; chorismate biosynthesis; chorismate from D-erythrose 4-phosphate and phosphoenolpyruvate: step 5/7. Functionally, catalyzes the specific phosphorylation of the 3-hydroxyl group of shikimic acid using ATP as a cosubstrate. The protein is Shikimate kinase of Geobacter metallireducens (strain ATCC 53774 / DSM 7210 / GS-15).